The primary structure comprises 67 residues: Large ribosomal subunit protein uL29 (67 aa).

It belongs to the universal ribosomal protein uL29 family.

In Exiguobacterium sibiricum (strain DSM 17290 / CCUG 55495 / CIP 109462 / JCM 13490 / 255-15), this protein is Large ribosomal subunit protein uL29.